A 317-amino-acid chain; its full sequence is Small ribosomal subunit protein RACK1 (317 aa).

WD repeat units lie at residues 13-44, 61-91, 103-133, 146-178, 190-220, 231-260, and 281-311; these read GHSG…IMWK, GHSH…RLWD, GHTK…KLWN, GHTE…KVWN, GHTG…MLWD, DSGD…KIWD, and AEPP…RVWQ.

The protein belongs to the WD repeat G protein beta family. Ribosomal protein RACK1 subfamily.

It is found in the cytoplasm. Involved in the recruitment, assembly and/or regulation of a variety of signaling molecules. Interacts with a wide variety of proteins and plays a role in many cellular processes. Required for VANGL2 membrane localization, inhibits Wnt signaling and regulates cellular polarization and oriented cell division during gastrulation. The sequence is that of Small ribosomal subunit protein RACK1 (gnb2l1) from Oreochromis niloticus (Nile tilapia).